A 92-amino-acid chain; its full sequence is MDLGQRVVRVIPLAPLPVRVYNAGGLRVDFFPRFFGRSPQGVGVGFARLKLSASVGSNGFRLTRAVWIFWLCFLVSGLSRAFLVYFLSVIRI.

The chain crosses the membrane as a helical span at residues 65–86; sequence AVWIFWLCFLVSGLSRAFLVYF.

It localises to the membrane. This is an uncharacterized protein from Treponema pallidum (strain Nichols).